Reading from the N-terminus, the 445-residue chain is Tubby-like F-box protein 14 (445 aa).

An F-box domain is found at Ser-56–Ile-114.

Belongs to the TUB family. Ubiquitous.

The chain is Tubby-like F-box protein 14 (TULP14) from Oryza sativa subsp. japonica (Rice).